The sequence spans 99 residues: Small ribosomal subunit protein uS17 (99 aa).

This sequence belongs to the universal ribosomal protein uS17 family. As to quaternary structure, part of the 30S ribosomal subunit.

One of the primary rRNA binding proteins, it binds specifically to the 5'-end of 16S ribosomal RNA. This is Small ribosomal subunit protein uS17 from Thermosipho melanesiensis (strain DSM 12029 / CIP 104789 / BI429).